Reading from the N-terminus, the 490-residue chain is Cytochrome P450 monooxygenase aclL (490 aa).

The chain crosses the membrane as a helical span at residues 1 to 21; the sequence is MLFSLGPLTIVYGLVIFVVAK. N-linked (GlcNAc...) asparagine glycosylation is present at asparagine 176. Residue cysteine 434 participates in heme binding.

Belongs to the cytochrome P450 family. The cofactor is heme.

It localises to the membrane. It participates in mycotoxin biosynthesis. Cytochrome P450 monooxygenase; part of the gene cluster that mediates the biosynthesis of aspirochlorine (or antibiotic A30641), an unusual halogenated spiro compound with distinctive antifungal properties due to selective inhibition of protein biosynthesis, and which is also active against bacteria, viruses, and murine tumor cells. The non-ribosomal peptide synthetase (NRPS) aclP is responsible the formation of the diketopiperazine (DKP) core from the condensation of 2 phenylalanine residues. One Phe residue is tailored into chlorotyrosine by hydroxylation and chlorination, whereas the second Phe undergoes an unprecedented C-C bond cleavage to be converted into glycine. After formation of the DKP, sulfur is incorporated into the DKP by conjugation with glutathione by aclG, followed by its stepwise degradation to the thiol by aclI, aclJ and aclK, and the dithiol oxidation by aclT. In addition, oxygenases (aclB, aclC, aclL and aclO) and O-methyltransferases (aclM and aclU) act as tailoring enzymes to produce the intermediate dechloroaspirochlorine. Ultimately, chlorination of dechloroaspirochlorine by the halogenase aclH is the last step in the aspirochlorine pathway. This chain is Cytochrome P450 monooxygenase aclL, found in Aspergillus oryzae (strain ATCC 42149 / RIB 40) (Yellow koji mold).